Here is a 275-residue protein sequence, read N- to C-terminus: MAIKKYKPYTPSMRGRVLASDFFDLSEKKAPKRLSFGIKSISGRNNQGKITCRHKGGGHKRKYRLVDFKRCKTGVLAKVSDIYYDPNRSAHIALLNYLDGEKSYIISPNLLKVGTYVVSGKEASPDIGNALPLNCVPLGFEIHNIELIHGKGGQVARAAGTSAKLIAKSQDYVTIKLPSGEIRLFRGECYATIGKVGNIDHNNEKIGKAGRNRWLGIRPTVRGSAMNAVDHPHGGGEGRSPIGRSQPSTPWGRPALGIKTRRNKFSNFYILRRRK.

Positions 225-256 (AMNAVDHPHGGGEGRSPIGRSQPSTPWGRPAL) are disordered.

Belongs to the universal ribosomal protein uL2 family. As to quaternary structure, part of the 50S ribosomal subunit.

It is found in the plastid. It localises to the chloroplast. This is Large ribosomal subunit protein uL2c (rpl2) from Cyanidium caldarium (Red alga).